The following is a 336-amino-acid chain: Neuropeptides B/W receptor type 2 (336 aa).

The interval 1 to 25 (MMEATGLEGLESTSSPCPGSTGTGL) is disordered. The Extracellular portion of the chain corresponds to 1–45 (MMEATGLEGLESTSSPCPGSTGTGLSWDNGTRHNATFPEPLPALY). Low complexity predominate over residues 12 to 25 (STSSPCPGSTGTGL). Residues Asn-29 and Asn-34 are each glycosylated (N-linked (GlcNAc...) asparagine). A helical transmembrane segment spans residues 46 to 68 (VLLPVVYSVICAVGLVGNAAVIC). Residues 69–80 (VILRAPKMKTVT) are Cytoplasmic-facing. The helical transmembrane segment at 81–103 (HVFILNLAIADGLFTLVLPTNIA) threads the bilayer. Over 104 to 127 (EHLLQRWPFGEVLCKLVLAIDHCN) the chain is Extracellular. Cysteines 117 and 197 form a disulfide. Residues 128–146 (IFSSVYFLAAMSIDRYLVV) form a helical membrane-spanning segment. The Cytoplasmic segment spans residues 147–165 (LATARSRRMPRRTVHRAKV). Residues 166-188 (ASLCVWLGVTVAVLPFLTFAGVY) traverse the membrane as a helical segment. Residues 189-213 (NNELQVTSCGLSFPRPERAWFQASR) are Extracellular-facing. The chain crosses the membrane as a helical span at residues 214–236 (IYTLVLGFVVPMCTLCVLYADLL). At 237-256 (RRLRALRLHSGAKALGKAKR) the chain is on the cytoplasmic side. Residues 257–279 (KVSLLVLAVLAVGLLCWTPFHLA) traverse the membrane as a helical segment. Residues 280 to 293 (SIVALTTDLPQTPL) are Extracellular-facing. The helical transmembrane segment at 294–316 (VIIVSYVVTSLSYTSSCLNPFLY) threads the bilayer. The Cytoplasmic segment spans residues 317–336 (AFLDHSFRKSLRTACRCQGA).

The protein belongs to the G-protein coupled receptor 1 family.

It localises to the cell membrane. In terms of biological role, interacts specifically with a number of opioid ligands. Receptor for neuropeptides B and W, which may be involved in neuroendocrine system regulation, food intake and the organization of other signals. In Bos taurus (Bovine), this protein is Neuropeptides B/W receptor type 2 (NPBWR2).